Reading from the N-terminus, the 536-residue chain is Phosphoenolpyruvate carboxykinase (ATP) (536 aa).

The substrate site is built by arginine 61, tyrosine 195, and lysine 201. ATP-binding positions include lysine 201, histidine 220, and 236 to 244; that span reads GLSGTGKTT. Residues lysine 201 and histidine 220 each coordinate Mn(2+). Aspartate 257 contacts Mn(2+). Positions 285, 322, and 447 each coordinate ATP. A substrate-binding site is contributed by arginine 322.

This sequence belongs to the phosphoenolpyruvate carboxykinase (ATP) family. It depends on Mn(2+) as a cofactor.

The protein localises to the cytoplasm. It catalyses the reaction oxaloacetate + ATP = phosphoenolpyruvate + ADP + CO2. The protein operates within carbohydrate biosynthesis; gluconeogenesis. In terms of biological role, involved in the gluconeogenesis. Catalyzes the conversion of oxaloacetate (OAA) to phosphoenolpyruvate (PEP) through direct phosphoryl transfer between the nucleoside triphosphate and OAA. The protein is Phosphoenolpyruvate carboxykinase (ATP) of Rhizobium etli (strain CIAT 652).